Consider the following 96-residue polypeptide: Small ribosomal subunit protein bS6 (96 aa).

It belongs to the bacterial ribosomal protein bS6 family.

Its function is as follows. Binds together with bS18 to 16S ribosomal RNA. The sequence is that of Small ribosomal subunit protein bS6 from Streptococcus mutans serotype c (strain ATCC 700610 / UA159).